A 115-amino-acid polypeptide reads, in one-letter code: Large ribosomal subunit protein bL20c (115 aa).

The protein belongs to the bacterial ribosomal protein bL20 family.

Its subcellular location is the plastid. It is found in the chloroplast. Binds directly to 23S ribosomal RNA and is necessary for the in vitro assembly process of the 50S ribosomal subunit. It is not involved in the protein synthesizing functions of that subunit. This Angiopteris evecta (Mule's foot fern) protein is Large ribosomal subunit protein bL20c.